A 407-amino-acid polypeptide reads, in one-letter code: Cell division control protein 12 (407 aa).

Ser2 is subject to N-acetylserine. A Septin-type G domain is found at 31–314 (EGGTFTVMLC…ETYRRLRLEG (284 aa)). The G1 motif stretch occupies residues 41 to 48 (GESGLGKT). Residues 41 to 48 (GESGLGKT), Thr75, Gly101, 180 to 188 (KADTLTAQE), Gly247, and Arg263 contribute to the GTP site. Positions 98–101 (DTPG) are G3 motif. The segment at 179–182 (AKAD) is G4 motif. A coiled-coil region spans residues 344–406 (EEENALKKYF…KSLQVKKSHL (63 aa)).

It belongs to the TRAFAC class TrmE-Era-EngA-EngB-Septin-like GTPase superfamily. Septin GTPase family. Component of the septin complex which consists of CDC3, CDC10, CDC11, CDC12 and probably SHS1 and rearranges to a cortical collar of highly ordered filaments at the mother-bud-neck. A complex formed by CDC3, CDC10, CDC11 and CDC12 is capable of forming long filaments in vitro and the components seem to be present in a 2:2:2:2 arrangement in vivo. The filaments are proposed to be formed by the end-to-end polymerization of CDC3-CDC12-CDC11 complexes with CDC10 serving as a bridge to bundle the polymers into paired filaments. Component of the GIN4 complex composed of at least BNI5, CDC3, CDC10, CDC11, CDC12, GIN4, NAP1 and SHS1. Self-associates. Interacts with SYP1.

Its subcellular location is the membrane. The protein localises to the bud neck. Functionally, septins are GTPases involved in cytokinesis that assemble early in the cell cycle as a patch at the incipient bud site and form a ring approximate 15 minutes before bud emergence, which transforms into an hour-glass shaped collar of cortical filaments that spans both sides of the mother-bud neck. This collar persists until just before cytokinesis, when it splits into two rings that occupy opposite sides of the neck. The septins at the bud neck serve as a structural scaffold that recruits different components involved in diverse processes at specific stages during the cell cycle. Many proteins bind asymmetrically to the septin collar. The septin assembly is regulated by protein kinases GIN4 and/or CLA4. May act by recruiting MYO1 and HOF1, a protein involved in septation, to the site of cleavage. Septins are also involved in cell morphogenesis, bud site selection, chitin deposition, cell cycle regulation, cell compartmentalization and spore wall formation. This Saccharomyces cerevisiae (strain ATCC 204508 / S288c) (Baker's yeast) protein is Cell division control protein 12 (CDC12).